Reading from the N-terminus, the 1569-residue chain is Pentafunctional AROM polypeptide (1569 aa).

The 3-dehydroquinate synthase stretch occupies residues 1–382 (MAEAKKPGPE…HEPRASVVDD (382 aa)). NAD(+) contacts are provided by residues 49 to 51 (DTN), 84 to 87 (EASK), 115 to 117 (GGV), and D120. R131 is a binding site for 7-phospho-2-dehydro-3-deoxy-D-arabino-heptonate. 140–141 (TT) lines the NAD(+) pocket. Residues D147 and K153 each contribute to the 7-phospho-2-dehydro-3-deoxy-D-arabino-heptonate site. K162 serves as a coordination point for NAD(+). N163 contacts 7-phospho-2-dehydro-3-deoxy-D-arabino-heptonate. Residues 180 to 183 (FLET) and N191 contribute to the NAD(+) site. E195 serves as a coordination point for Zn(2+). Residues 195-198 (EVVK) and K248 each bind 7-phospho-2-dehydro-3-deoxy-D-arabino-heptonate. The Proton acceptor; for 3-dehydroquinate synthase activity role is filled by E258. 7-phospho-2-dehydro-3-deoxy-D-arabino-heptonate-binding positions include 262-266 (RNLLN) and H269. H269 lines the Zn(2+) pocket. Residue H273 is the Proton acceptor; for 3-dehydroquinate synthase activity of the active site. 2 residues coordinate 7-phospho-2-dehydro-3-deoxy-D-arabino-heptonate: H285 and K354. Residue H285 participates in Zn(2+) binding. An EPSP synthase region spans residues 395 to 837 (VTPGVPSNLD…WDILSQAFKV (443 aa)). C819 acts as the For EPSP synthase activity in catalysis. Residues 859–1053 (ERSVFIIGMR…MEKDHSFFVS (195 aa)) form a shikimate kinase region. Residue 866–873 (GMRGAGKT) coordinates ATP. The tract at residues 1054 to 1267 (LTVPDVSEAA…AAPGQMSAAE (214 aa)) is 3-dehydroquinase. H1170 functions as the Proton acceptor; for 3-dehydroquinate dehydratase activity in the catalytic mechanism. K1198 (schiff-base intermediate with substrate; for 3-dehydroquinate dehydratase activity) is an active-site residue. The shikimate dehydrogenase stretch occupies residues 1280–1569 (PCNFYLFGKP…RDARSAVLGL (290 aa)).

This sequence in the N-terminal section; belongs to the sugar phosphate cyclases superfamily. Dehydroquinate synthase family. It in the 2nd section; belongs to the EPSP synthase family. The protein in the 3rd section; belongs to the shikimate kinase family. In the 4th section; belongs to the type-I 3-dehydroquinase family. This sequence in the C-terminal section; belongs to the shikimate dehydrogenase family. In terms of assembly, homodimer. Requires Zn(2+) as cofactor.

It localises to the cytoplasm. The enzyme catalyses 7-phospho-2-dehydro-3-deoxy-D-arabino-heptonate = 3-dehydroquinate + phosphate. The catalysed reaction is 3-dehydroquinate = 3-dehydroshikimate + H2O. It catalyses the reaction shikimate + NADP(+) = 3-dehydroshikimate + NADPH + H(+). It carries out the reaction shikimate + ATP = 3-phosphoshikimate + ADP + H(+). The enzyme catalyses 3-phosphoshikimate + phosphoenolpyruvate = 5-O-(1-carboxyvinyl)-3-phosphoshikimate + phosphate. The protein operates within metabolic intermediate biosynthesis; chorismate biosynthesis; chorismate from D-erythrose 4-phosphate and phosphoenolpyruvate: step 2/7. It functions in the pathway metabolic intermediate biosynthesis; chorismate biosynthesis; chorismate from D-erythrose 4-phosphate and phosphoenolpyruvate: step 3/7. Its pathway is metabolic intermediate biosynthesis; chorismate biosynthesis; chorismate from D-erythrose 4-phosphate and phosphoenolpyruvate: step 4/7. It participates in metabolic intermediate biosynthesis; chorismate biosynthesis; chorismate from D-erythrose 4-phosphate and phosphoenolpyruvate: step 5/7. The protein operates within metabolic intermediate biosynthesis; chorismate biosynthesis; chorismate from D-erythrose 4-phosphate and phosphoenolpyruvate: step 6/7. The AROM polypeptide catalyzes 5 consecutive enzymatic reactions in prechorismate polyaromatic amino acid biosynthesis. The protein is Pentafunctional AROM polypeptide of Fusarium vanettenii (strain ATCC MYA-4622 / CBS 123669 / FGSC 9596 / NRRL 45880 / 77-13-4) (Fusarium solani subsp. pisi).